Reading from the N-terminus, the 126-residue chain is UPF0102 protein Cphamn1_0017 (126 aa).

It belongs to the UPF0102 family.

In Chlorobium phaeobacteroides (strain BS1), this protein is UPF0102 protein Cphamn1_0017.